We begin with the raw amino-acid sequence, 321 residues long: Phospho-N-acetylmuramoyl-pentapeptide-transferase (321 aa).

The next 10 membrane-spanning stretches (helical) occupy residues 4–24 (MVWA…WLIP), 51–71 (TMGG…TVGF), 75–95 (SGVL…DDYI), 109–129 (QKFT…VYGI), 139–159 (GFEV…LLIV), 173–193 (GLAA…ASAG), 195–215 (SDVT…FLFF), 222–242 (MFMG…LALL), 247–267 (LILP…ILQV), and 297–317 (VVYT…LLAM).

Belongs to the glycosyltransferase 4 family. MraY subfamily. Requires Mg(2+) as cofactor.

It is found in the cell membrane. The catalysed reaction is UDP-N-acetyl-alpha-D-muramoyl-L-alanyl-gamma-D-glutamyl-meso-2,6-diaminopimeloyl-D-alanyl-D-alanine + di-trans,octa-cis-undecaprenyl phosphate = di-trans,octa-cis-undecaprenyl diphospho-N-acetyl-alpha-D-muramoyl-L-alanyl-D-glutamyl-meso-2,6-diaminopimeloyl-D-alanyl-D-alanine + UMP. It functions in the pathway cell wall biogenesis; peptidoglycan biosynthesis. Functionally, catalyzes the initial step of the lipid cycle reactions in the biosynthesis of the cell wall peptidoglycan: transfers peptidoglycan precursor phospho-MurNAc-pentapeptide from UDP-MurNAc-pentapeptide onto the lipid carrier undecaprenyl phosphate, yielding undecaprenyl-pyrophosphoryl-MurNAc-pentapeptide, known as lipid I. The chain is Phospho-N-acetylmuramoyl-pentapeptide-transferase from Heliobacterium modesticaldum (strain ATCC 51547 / Ice1).